The following is a 339-amino-acid chain: Protein pelota homolog (339 aa).

This sequence belongs to the eukaryotic release factor 1 family. Pelota subfamily. In terms of assembly, monomer. A divalent metal cation is required as a cofactor.

It localises to the cytoplasm. In terms of biological role, may function in recognizing stalled ribosomes, interact with stem-loop structures in stalled mRNA molecules, and effect endonucleolytic cleavage of the mRNA. May play a role in the release non-functional ribosomes and degradation of damaged mRNAs. Has endoribonuclease activity. The chain is Protein pelota homolog from Picrophilus torridus (strain ATCC 700027 / DSM 9790 / JCM 10055 / NBRC 100828 / KAW 2/3).